A 313-amino-acid polypeptide reads, in one-letter code: Porphobilinogen deaminase (313 aa).

Cys-242 carries the S-(dipyrrolylmethanemethyl)cysteine modification.

It belongs to the HMBS family. As to quaternary structure, monomer. Requires dipyrromethane as cofactor.

The catalysed reaction is 4 porphobilinogen + H2O = hydroxymethylbilane + 4 NH4(+). It participates in porphyrin-containing compound metabolism; protoporphyrin-IX biosynthesis; coproporphyrinogen-III from 5-aminolevulinate: step 2/4. Functionally, tetrapolymerization of the monopyrrole PBG into the hydroxymethylbilane pre-uroporphyrinogen in several discrete steps. In Salmonella arizonae (strain ATCC BAA-731 / CDC346-86 / RSK2980), this protein is Porphobilinogen deaminase.